The following is a 633-amino-acid chain: MSSNNNTNTAPANANSSHHHHHHHHHHHHHGHGGSNSTLNNPKSSLADGAHIGNYQIVKTLGEGSFGKVKLAYHTTTGQKVALKIINKKVLAKSDMQGRIEREISYLRLLRHPHIIKLYDVIKSKDEIIMVIEYAGNELFDYIVQRDKMSEQEARRFFQQIISAVEYCHRHKIVHRDLKPENLLLDEHLNVKIADFGLSNIMTDGNFLKTSCGSPNYAAPEVISGKLYAGPEVDVWSCGVILYVMLCRRLPFDDESIPVLFKNISNGVYTLPKFLSPGAAGLIKRMLIVNPLNRISIHEIMQDDWFKVDLPEYLLPPDLKPHPEEENENNDSKKDGSSPDNDEIDDNLVNILSSTMGYEKDEIYESLESSEDTPAFNEIRDAYMLIKENKSLIKDMKANKSVSDELDTFLSQSPPTFQQQSKSHQKSQVDHETAKQHARRMASAITQQRTYHQSPFMDQYKEEDSTVSILPTSLPQIHRANMLAQGSPAASKISPLVTKKSKTRWHFGIRSRSYPLDVMGEIYIALKNLGAEWAKPSEEDLWTIKLRWKYDIGNKTNTNEKIPDLMKMVIQLFQIETNNYLVDFKFDGWESSYGDDTTVSNISEDEMSTFSAYPFLHLTTKLIMELAVNSQSN.

Positions 1–16 (MSSNNNTNTAPANANS) are enriched in low complexity. The tract at residues 1-46 (MSSNNNTNTAPANANSSHHHHHHHHHHHHHGHGGSNSTLNNPKSSL) is disordered. The segment covering 17–32 (SHHHHHHHHHHHHHGH) has biased composition (basic residues). The region spanning 55–306 (YQIVKTLGEG…IHEIMQDDWF (252 aa)) is the Protein kinase domain. ATP-binding positions include 61-69 (LGEGSFGKV) and Lys84. The Proton acceptor role is filled by Asp177. Thr210 carries the post-translational modification Phosphothreonine; by autocatalysis. The segment at 313–392 (YLLPPDLKPH…YMLIKENKSL (80 aa)) is auto-inhibitory domain (AID). The interval 317–345 (PDLKPHPEEENENNDSKKDGSSPDNDEID) is disordered. Basic and acidic residues predominate over residues 319 to 337 (LKPHPEEENENNDSKKDGS). The UBA domain occupies 348–389 (LVNILSSTMGYEKDEIYESLESSEDTPAFNEIRDAYMLIKEN). Residues 409–434 (FLSQSPPTFQQQSKSHQKSQVDHETA) are disordered. Position 413 is a phosphoserine (Ser413). Residue Lys461 forms a Glycyl lysine isopeptide (Lys-Gly) (interchain with G-Cter in ubiquitin) linkage. At Ser487 the chain carries Phosphoserine. Lys549 is covalently cross-linked (Glycyl lysine isopeptide (Lys-Gly) (interchain with G-Cter in SUMO)). A Phosphoserine modification is found at Ser632.

It belongs to the protein kinase superfamily. CAMK Ser/Thr protein kinase family. SNF1 subfamily. Component of the AMP-activated protein kinase complex also known as the SNF1 kinase complex (Snf1c), a heterotrimeric complex composed of an alpha subunit (SNF1), a regulatory subunit beta (GAL83 and substoichiometric alternate beta subunits SIP1 and SIP2), and a regulatory subunit gamma (SNF4). Interacts with the transcriptional activator SIP4. Interacts with SAK1. Interacts with CTK1: Interacts with adenylate cyclase CYR1. In terms of processing, phosphorylation at Thr-210 in response to glucose limitation leads to activation of kinase activity. ADP, but not AMP, protects the enzyme from dephosphorylation at Thr-210 by GLC7. Post-translationally, sumoylation by the SUMO (E3) ligase MMS21 leads to inhibition by interaction of SUMO attached to Lys-549 with a SUMO-interacting sequence motif located near the active site of SNF1, and by targeting SNF1 for glucose-induced destruction via the SLX5-SLX8 (SUMO-directed) ubiquitin ligase.

It is found in the cytoplasm. The protein resides in the nucleus. The protein localises to the nucleus membrane. It catalyses the reaction L-seryl-[protein] + ATP = O-phospho-L-seryl-[protein] + ADP + H(+). The enzyme catalyses L-threonyl-[protein] + ATP = O-phospho-L-threonyl-[protein] + ADP + H(+). Its activity is regulated as follows. The kinase activity is positively regulated by SNF4 via sequestration of the SNF1 auto-inhibitory domain (AID). Serine/threonine protein kinase essential for release from glucose repression. Catalytic subunit of the AMP-activated protein kinase complex also known as the SNF1 kinase complex (Snf1c), a central regulator of cellular energy homeostasis, which, in response to a fall in intracellular ATP levels, activates energy-producing pathways and inhibits energy-consuming processes. The complex phosphorylates histone H3 to form H3S10ph, which promotes H3K14ac formation, leading to transcriptional activation through TBP recruitment to the promoters. The complex also negatively regulates the HOG1 MAPK pathway in ER stress response including unfolded protein response (UPR). Under nutrient/energy depletion, the complex phosphorylates and activates PAS kinase PSK1 which in turn activates PBS1, leading to the inhibition of the TORC1 signaling pathway. SNF1 also interacts and phosphorylates adenylate cyclase CYR1 and negatively regulates the protein kinase A signaling pathway. Also phosphorylates and regulates the transcriptional activator CAT8. The chain is Carbon catabolite-derepressing protein kinase from Saccharomyces cerevisiae (strain ATCC 204508 / S288c) (Baker's yeast).